The chain runs to 479 residues: Alliin lyase (479 aa).

The signal sequence occupies residues Met1–Ser25. A propeptide spanning residues Phe26–Ala34 is cleaved from the precursor. Residues Glu47 to Ala93 form the EGF-like; atypical domain. An N-linked (GlcNAc...) asparagine glycan is attached at Asn53. Cystine bridges form between Cys54/Cys73, Cys75/Cys84, and Cys78/Cys91. Tyr126 to Phe134 contacts chloride. Residues Asn180 and Asn225 are each glycosylated (N-linked (GlcNAc...) asparagine). Lys285 is subject to N6-(pyridoxal phosphate)lysine. 2 N-linked (GlcNAc...) asparagine glycosylation sites follow: Asn342 and Asn362. A disulfide bond links Cys402 and Cys410.

The protein belongs to the alliinase family. As to quaternary structure, homodimer. Requires pyridoxal 5'-phosphate as cofactor.

It localises to the vacuole. It carries out the reaction an S-alkyl-L-cysteine S-oxide = an S-alkyl sulfenate + 2-aminoprop-2-enoate. This Allium cepa (Onion) protein is Alliin lyase.